A 224-amino-acid polypeptide reads, in one-letter code: tRNA (guanine-N(7)-)-methyltransferase (224 aa).

S-adenosyl-L-methionine contacts are provided by Glu-45, Glu-70, Asp-97, and Asp-119. Asp-119 is a catalytic residue. Residues Lys-123, Asp-155, and 199–202 (TEYE) contribute to the substrate site.

This sequence belongs to the class I-like SAM-binding methyltransferase superfamily. TrmB family.

It carries out the reaction guanosine(46) in tRNA + S-adenosyl-L-methionine = N(7)-methylguanosine(46) in tRNA + S-adenosyl-L-homocysteine. It functions in the pathway tRNA modification; N(7)-methylguanine-tRNA biosynthesis. In terms of biological role, catalyzes the formation of N(7)-methylguanine at position 46 (m7G46) in tRNA. The chain is tRNA (guanine-N(7)-)-methyltransferase from Ureaplasma urealyticum serovar 10 (strain ATCC 33699 / Western).